The primary structure comprises 51 residues: Large ribosomal subunit protein eL39 (51 aa).

Positions Met1–Pro22 are disordered. Positions Phe7–Asn20 are enriched in basic residues.

It belongs to the eukaryotic ribosomal protein eL39 family. As to quaternary structure, component of the large ribosomal subunit (LSU). Mature yeast ribosomes consist of a small (40S) and a large (60S) subunit. The 40S small subunit contains 1 molecule of ribosomal RNA (18S rRNA) and 33 different proteins (encoded by 57 genes). The large 60S subunit contains 3 rRNA molecules (25S, 5.8S and 5S rRNA) and 46 different proteins (encoded by 81 genes). eL39 interacts with YIH1.

The protein resides in the cytoplasm. Functionally, component of the ribosome, a large ribonucleoprotein complex responsible for the synthesis of proteins in the cell. The small ribosomal subunit (SSU) binds messenger RNAs (mRNAs) and translates the encoded message by selecting cognate aminoacyl-transfer RNA (tRNA) molecules. The large subunit (LSU) contains the ribosomal catalytic site termed the peptidyl transferase center (PTC), which catalyzes the formation of peptide bonds, thereby polymerizing the amino acids delivered by tRNAs into a polypeptide chain. The nascent polypeptides leave the ribosome through a tunnel in the LSU and interact with protein factors that function in enzymatic processing, targeting, and the membrane insertion of nascent chains at the exit of the ribosomal tunnel. This chain is Large ribosomal subunit protein eL39, found in Saccharomyces cerevisiae (strain ATCC 204508 / S288c) (Baker's yeast).